The following is a 401-amino-acid chain: MALVSQARSLGKYFLLLDNLLVVLGFFIVFPLISIRFVDQLGWAAVLVGLALGLRQLVQQGLGIFGGAIADRFGAKPMIVTGMLMRAAGFALMAMADEPWILWLACALSGLGGTLFDPPRTALVIKLTRPHERGRFYSLLMMQDSAGAVIGALIGSWLLQYDFHFVCWTGAVIFILAAGWNVWLLPAYRISTVRAPMKEGLMRVLRDRRFVTYVLTLTGYYMLSVQVMLMLPIVVNEIAGSPAAVKWMYAIEAALSLTLLYPIARWSEKRFRLEQRLMFGLLIMTLSLFPVGLITHLQTLFMFICFFYMGSIIAEPARETLSASLADSRARGSYMGFSRLGLALGGALGYTGGGWMYDTGRTLEMPELPWFLLGVIGLITLVGLYWQFNQRRIESAMLSGS.

11 helical membrane passes run 13 to 33, 34 to 54, 99 to 116, 139 to 159, 165 to 185, 214 to 234, 243 to 263, 277 to 297, 299 to 319, 340 to 360, and 368 to 388; these read YFLL…FPLI, SIRF…ALGL, PWIL…GTLF, LLMM…SWLL, FVCW…VWLL, VLTL…LPIV, AAVK…LYPI, LMFG…ITHL, TLFM…PARE, LGLA…YDTG, and LPWF…YWQF.

Belongs to the major facilitator superfamily. DHA1 family. MdtH (TC 2.A.1.2.21) subfamily.

It is found in the cell inner membrane. This chain is Multidrug resistance protein MdtH, found in Yersinia enterocolitica serotype O:8 / biotype 1B (strain NCTC 13174 / 8081).